The following is a 369-amino-acid chain: Anhydro-N-acetylmuramic acid kinase (369 aa).

Residue 12-19 (GTSMDGVD) participates in ATP binding.

It belongs to the anhydro-N-acetylmuramic acid kinase family.

The catalysed reaction is 1,6-anhydro-N-acetyl-beta-muramate + ATP + H2O = N-acetyl-D-muramate 6-phosphate + ADP + H(+). Its pathway is amino-sugar metabolism; 1,6-anhydro-N-acetylmuramate degradation. It participates in cell wall biogenesis; peptidoglycan recycling. In terms of biological role, catalyzes the specific phosphorylation of 1,6-anhydro-N-acetylmuramic acid (anhMurNAc) with the simultaneous cleavage of the 1,6-anhydro ring, generating MurNAc-6-P. Is required for the utilization of anhMurNAc either imported from the medium or derived from its own cell wall murein, and thus plays a role in cell wall recycling. In Shewanella oneidensis (strain ATCC 700550 / JCM 31522 / CIP 106686 / LMG 19005 / NCIMB 14063 / MR-1), this protein is Anhydro-N-acetylmuramic acid kinase.